The following is a 335-amino-acid chain: MAEIYDFDKSAWDVKGSIQPIGPKTYSDGRLIPQVRVIDPGLGVRKDECFSYIFLWGLSEDSDPLSPPIGRTFGSLPLGVGRSTARPEELLKEATILDILVRRTAGFNEQLVFYDNSPLKVLTPWKKVLTSGSVFNANQVCETVNLIPLDFYQRFRVVYMSITRLSDNGGYDIPRHWPEFRSMNAIAFNSLVTIRFEQSPIEHWRILNSEHLLVATFMVHIGNFQRKKTDMYSADYCKPKIEKMGLVFALGGIGGTSLHIRATGKMSKTLWALEGFKKHLCYPLMDINEDLNRELWRSKCKIVRIQAVLQPSVPQDFRVYRDVIIEDDQGLFKIL.

Belongs to the morbillivirus/respirovirus/rubulavirus M protein family.

It is found in the virion. Functionally, the M protein has a crucial role in virus assembly and interacts with the RNP complex as well as with the viral membrane. The sequence is that of Matrix protein (M) from Rinderpest virus (strain Kabete O) (RDV).